The following is a 755-amino-acid chain: Transcription factor kayak, isoforms A/B/F (755 aa).

Low complexity-rich tracts occupy residues 23–66 (FAQQ…LPTQ) and 149–159 (QQHYPSESQSS). 4 disordered regions span residues 23–75 (FAQQ…SQSV), 149–168 (QQHYPSESQSSASGWNPETP), 316–350 (LGQGSESEDSNASYNDTQMNEEQDTTDTSSAHTDS), and 383–440 (GSAS…KRRV). Positions 316 to 333 (LGQGSESEDSNASYNDTQ) are enriched in polar residues. Low complexity-rich tracts occupy residues 341-350 (TDTSSAHTDS) and 383-397 (GSASVGSSNANTSNT). One can recognise a bZIP domain in the interval 418–481 (EQKRAVRRER…NQLEYLLATH (64 aa)). Residues 420–439 (KRAVRRERNKQAAARCRKRR) are basic motif. A leucine-zipper region spans residues 446 to 453 (LTEEVEQL). Over residues 510-531 (AGSSGSGASSHHNHNSNDSSNG) the composition is skewed to low complexity. 2 disordered regions span residues 510 to 552 (AGSS…PLDL) and 716 to 755 (DGGTGLTPVSGPLVPNSSSTNKHPLELPTPTAEPSKLVSL). Polar residues predominate over residues 539–549 (TLNSTGRSNSP). A Phosphoserine modification is found at S548.

It belongs to the bZIP family. Fos subfamily. In terms of assembly, homodimer. Heterodimer with Jra. The kay-Jra heterodimer binds more stably to the AP-1 site than either of the two proteins alone. In terms of tissue distribution, early expression in the embryo is mesodermal and some of this expression is localized to a region surrounding the cephalic furrow. Later in embryonic development expression is ectodermal, corresponding to muscle attachment sites. Also observed in part of the mid- and hindgut and in the anal pad.

The protein localises to the nucleus. Functionally, developmentally regulated transcription factor AP-1 binds and recognizes the enhancer DNA sequence: 5'-TGA[CG]TCA-3'. May play a role in the function or determination of a particular subset of cells in the developing embryo. It is able to carry out its function either independently of or in conjunction with Jra. The protein is Transcription factor kayak, isoforms A/B/F (kay) of Drosophila melanogaster (Fruit fly).